The chain runs to 203 residues: Cytochrome c biogenesis ATP-binding export protein CcmA (203 aa).

An ABC transporter domain is found at 2–203; it reads LEALDLAGVR…KTSQTVRMGA (202 aa). 34 to 41 serves as a coordination point for ATP; sequence GENGSGKT.

It belongs to the ABC transporter superfamily. CcmA exporter (TC 3.A.1.107) family. The complex is composed of two ATP-binding proteins (CcmA) and two transmembrane proteins (CcmB).

It is found in the cell inner membrane. It catalyses the reaction heme b(in) + ATP + H2O = heme b(out) + ADP + phosphate + H(+). Its function is as follows. Part of the ABC transporter complex CcmAB involved in the biogenesis of c-type cytochromes; once thought to export heme, this seems not to be the case, but its exact role is uncertain. Responsible for energy coupling to the transport system. This chain is Cytochrome c biogenesis ATP-binding export protein CcmA, found in Pseudomonas aeruginosa.